Consider the following 177-residue polypeptide: Large ribosomal subunit protein uL6 (177 aa).

It belongs to the universal ribosomal protein uL6 family. In terms of assembly, part of the 50S ribosomal subunit.

This protein binds to the 23S rRNA, and is important in its secondary structure. It is located near the subunit interface in the base of the L7/L12 stalk, and near the tRNA binding site of the peptidyltransferase center. This is Large ribosomal subunit protein uL6 from Bradyrhizobium diazoefficiens (strain JCM 10833 / BCRC 13528 / IAM 13628 / NBRC 14792 / USDA 110).